The primary structure comprises 275 residues: Large ribosomal subunit protein uL2 (275 aa).

Disordered stretches follow at residues 24–54 (LYKG…VRHQ) and 223–275 (VAMN…RHKR). Basic and acidic residues-rich tracts occupy residues 25-38 (YKGR…EKKT) and 229-241 (DHPH…RTGE).

It belongs to the universal ribosomal protein uL2 family. Part of the 50S ribosomal subunit. Forms a bridge to the 30S subunit in the 70S ribosome.

Its function is as follows. One of the primary rRNA binding proteins. Required for association of the 30S and 50S subunits to form the 70S ribosome, for tRNA binding and peptide bond formation. It has been suggested to have peptidyltransferase activity; this is somewhat controversial. Makes several contacts with the 16S rRNA in the 70S ribosome. This is Large ribosomal subunit protein uL2 from Azoarcus sp. (strain BH72).